The sequence spans 415 residues: Probable glucuronosyltransferase Os01g0926600 (415 aa).

At 1-4 (MAMR) the chain is on the cytoplasmic side. Residues 5 to 25 (LSSAAVALALLLAATALEDVA) traverse the membrane as a helical; Signal-anchor for type II membrane protein segment. At 26–415 (RGQDTERIEG…QGPVGDLKPW (390 aa)) the chain is on the lumenal side. N-linked (GlcNAc...) asparagine glycans are attached at residues Asn142 and Asn403.

It belongs to the glycosyltransferase 47 family.

The protein resides in the golgi apparatus membrane. Functionally, involved in the synthesis of glucuronoxylan hemicellulose in secondary cell walls. The chain is Probable glucuronosyltransferase Os01g0926600 from Oryza sativa subsp. japonica (Rice).